Reading from the N-terminus, the 286-residue chain is MTFSQMILNLQEFWQKQGCAIMQPYDFPAGAGTFHPATFLRSLGKKPWAAAYVAPSRRPTDGRYGENPNRLGAYYQFQVLIKPSPDNIQELYLKSLENLGFDLKSHDIRFVEDNWESPSLGAWGLGWEVWLDGMEVTQFTYFQQVGGISVDLVSVEITYGLERLAMYLQDVDNVYDIVWNEFNGEKITYKDVHKQGEFEFSKYNFEVSDVKTLNVQFENAYNECKNALEAKLALPAYDYCMLAAHTFNLLDARGAISATQRQDFMLKIRELSKNCALVYKENLDEN.

This sequence belongs to the class-II aminoacyl-tRNA synthetase family. As to quaternary structure, tetramer of two alpha and two beta subunits.

It localises to the cytoplasm. The enzyme catalyses tRNA(Gly) + glycine + ATP = glycyl-tRNA(Gly) + AMP + diphosphate. This is Glycine--tRNA ligase alpha subunit from Campylobacter lari (strain RM2100 / D67 / ATCC BAA-1060).